The following is a 587-amino-acid chain: Aspartate--tRNA ligase (587 aa).

E174 contacts L-aspartate. An aspartate region spans residues 198–201 (QITK). R220 lines the L-aspartate pocket. ATP-binding positions include 220–222 (RDE) and Q229. H443 contributes to the L-aspartate binding site. E477 lines the ATP pocket. R484 is a binding site for L-aspartate. An ATP-binding site is contributed by 529–532 (GLDR).

The protein belongs to the class-II aminoacyl-tRNA synthetase family. Type 1 subfamily. As to quaternary structure, homodimer.

It is found in the cytoplasm. It catalyses the reaction tRNA(Asp) + L-aspartate + ATP = L-aspartyl-tRNA(Asp) + AMP + diphosphate. In terms of biological role, catalyzes the attachment of L-aspartate to tRNA(Asp) in a two-step reaction: L-aspartate is first activated by ATP to form Asp-AMP and then transferred to the acceptor end of tRNA(Asp). The chain is Aspartate--tRNA ligase from Streptococcus pneumoniae (strain Taiwan19F-14).